The following is a 265-amino-acid chain: Mlc titration factor A (265 aa).

Zn(2+)-binding residues include H111, H148, H152, and E211.

The protein belongs to the MtfA family. In terms of assembly, interacts with Mlc. Requires Zn(2+) as cofactor.

The protein resides in the cytoplasm. Its function is as follows. Involved in the modulation of the activity of the glucose-phosphotransferase system (glucose-PTS). Interacts with the transcriptional repressor Mlc, preventing its interaction with DNA and leading to the modulation of expression of genes regulated by Mlc, including ptsG, which encodes the PTS system glucose-specific EIICB component. In terms of biological role, shows zinc-dependent metallopeptidase activity. The protein is Mlc titration factor A of Escherichia coli O8 (strain IAI1).